Reading from the N-terminus, the 264-residue chain is S-adenosylmethionine decarboxylase proenzyme (264 aa).

Catalysis depends on Ser-114, which acts as the Schiff-base intermediate with substrate; via pyruvic acid. The residue at position 114 (Ser-114) is a Pyruvic acid (Ser); by autocatalysis. The active-site Proton acceptor; for processing activity is His-119. Cys-142 serves as the catalytic Proton donor; for catalytic activity.

This sequence belongs to the prokaryotic AdoMetDC family. Type 2 subfamily. In terms of assembly, heterooctamer of four alpha and four beta chains arranged as a tetramer of alpha/beta heterodimers. Requires pyruvate as cofactor. In terms of processing, is synthesized initially as an inactive proenzyme. Formation of the active enzyme involves a self-maturation process in which the active site pyruvoyl group is generated from an internal serine residue via an autocatalytic post-translational modification. Two non-identical subunits are generated from the proenzyme in this reaction, and the pyruvate is formed at the N-terminus of the alpha chain, which is derived from the carboxyl end of the proenzyme. The post-translation cleavage follows an unusual pathway, termed non-hydrolytic serinolysis, in which the side chain hydroxyl group of the serine supplies its oxygen atom to form the C-terminus of the beta chain, while the remainder of the serine residue undergoes an oxidative deamination to produce ammonia and the pyruvoyl group blocking the N-terminus of the alpha chain.

It carries out the reaction S-adenosyl-L-methionine + H(+) = S-adenosyl 3-(methylsulfanyl)propylamine + CO2. The protein operates within amine and polyamine biosynthesis; S-adenosylmethioninamine biosynthesis; S-adenosylmethioninamine from S-adenosyl-L-methionine: step 1/1. Functionally, catalyzes the decarboxylation of S-adenosylmethionine to S-adenosylmethioninamine (dcAdoMet), the propylamine donor required for the synthesis of the polyamines spermine and spermidine from the diamine putrescine. In Chromohalobacter salexigens (strain ATCC BAA-138 / DSM 3043 / CIP 106854 / NCIMB 13768 / 1H11), this protein is S-adenosylmethionine decarboxylase proenzyme.